The primary structure comprises 655 residues: Protein movement modulator (655 aa).

The Extracellular segment spans residues 1–54 (MEQPSILVKILHSIPHVNYTFRRVNDTFNPDSDVYLEPTNNKLQCQQKGIELQS). N-linked (GlcNAc...) asparagine glycans are attached at residues asparagine 18 and asparagine 25. A helical membrane pass occupies residues 55 to 75 (LVILASIPAGLLIGSLLGLLL). Topologically, residues 76–95 (YLLTRCCDRRQRKPSAQRCQ) are cytoplasmic. The helical transmembrane segment at 96 to 116 (SCSLVIITLMTCAAIGLGLYG) threads the bilayer. The Extracellular segment spans residues 117–231 (NDDFHNGLLQ…GEFYESIRWP (115 aa)). 3 N-linked (GlcNAc...) asparagine glycosylation sites follow: asparagine 171, asparagine 188, and asparagine 211. A helical membrane pass occupies residues 232–252 (ATLAFLTVLLLLCTVLVIGVA). The Cytoplasmic portion of the chain corresponds to 253 to 258 (RRSRCT). A helical membrane pass occupies residues 259 to 279 (LIFFSVSGLFCIIICWLLAGV). Topologically, residues 280–401 (YLASSVAAGD…ALRGLCGGGL (122 aa)) are extracellular. N-linked (GlcNAc...) asparagine glycans are attached at residues asparagine 326 and asparagine 372. Residues 402-422 (LGLSLMMVAGLLTSFLLTILV) traverse the membrane as a helical segment. At 423–655 (YADSHAWIYL…CKTLESNDFY (233 aa)) the chain is on the cytoplasmic side. The tract at residues 446–576 (APLFPASNAP…NNHYNNTQHR (131 aa)) is disordered. Over residues 450–464 (PASNAPSASISPTAP) the composition is skewed to low complexity. The span at 465 to 480 (LSTGTINRTLLHHQQA) shows a compositional bias: polar residues. The segment covering 482-509 (SGGGSGTLPGSGGGAGAGGGVGANGHNG) has biased composition (gly residues). 2 stretches are compositionally biased toward low complexity: residues 526-539 (SPSSQSSHTSSTAT) and 546-576 (SYHNSHQQHNNHLYSNHYSHSNNHYNNTQHR). 2 positions are modified to phosphoserine: serine 597 and serine 599.

Belongs to the tweety family.

The protein resides in the cell membrane. The catalysed reaction is chloride(in) = chloride(out). Functionally, probable large-conductance Ca(2+)-activated chloride channel. Modulator of embryonic movement. This chain is Protein movement modulator, found in Drosophila melanogaster (Fruit fly).